A 706-amino-acid chain; its full sequence is Probable serine/threonine-protein kinase zyg-1 (706 aa).

The Protein kinase domain maps to 13–249 (YSHLKEIGKG…LTQIVLSEFM (237 aa)). ATP-binding positions include 19 to 27 (IGKGGFGVV) and lysine 41. Aspartate 131 serves as the catalytic Proton acceptor. Basic and acidic residues-rich tracts occupy residues 261–290 (SREH…DGRA) and 323–336 (FDSE…RDSG). 2 disordered regions span residues 261-351 (SREH…NRSQ) and 566-632 (SPSS…VAPS). Low complexity predominate over residues 566–579 (SPSSLMPSGSSQTS). Composition is skewed to polar residues over residues 580–592 (RFPF…NQPS) and 603–629 (KPTS…SPSV).

Belongs to the protein kinase superfamily. Ser/Thr protein kinase family. In terms of assembly, interacts with sel-10. In terms of processing, probably ubiquitinated by the SCF(sel-10) and SCF(lin-23) E3 ubiquitin ligase complexes, leading to its proteasomal degradation.

It is found in the cytoplasm. The protein resides in the cytoskeleton. Its subcellular location is the microtubule organizing center. It localises to the centrosome. The protein localises to the centriole. The catalysed reaction is L-seryl-[protein] + ATP = O-phospho-L-seryl-[protein] + ADP + H(+). It carries out the reaction L-threonyl-[protein] + ATP = O-phospho-L-threonyl-[protein] + ADP + H(+). In terms of biological role, protein kinase that plays a central role in centrosome duplication, control of centrosome size, spindle formation and nuclear envelope breakdown during cell divisions. Paternal copy is required to regulate synthesis of daughter centrioles prior to fertilization. Maternal copy regulates centrosome duplication during later cell cycles. Functions upstream of sas-5 and sas-6, and is required for their localization to the centrosome. Its role in nuclear envelope breakdown is mediated by the spindly-like protein spdl-1 and the RZZ complex, which in turn recruits the spindle checkpoint proteins mdf-1 and mdf-2, dynein and dynactin to unattached kinetochores. The polypeptide is Probable serine/threonine-protein kinase zyg-1 (Caenorhabditis elegans).